Reading from the N-terminus, the 132-residue chain is Large ribosomal subunit protein uL24 (132 aa).

The protein belongs to the universal ribosomal protein uL24 family. As to quaternary structure, part of the 50S ribosomal subunit.

Functionally, one of two assembly initiator proteins, it binds directly to the 5'-end of the 23S rRNA, where it nucleates assembly of the 50S subunit. Its function is as follows. Located at the polypeptide exit tunnel on the outside of the subunit. The sequence is that of Large ribosomal subunit protein uL24 from Aeropyrum pernix (strain ATCC 700893 / DSM 11879 / JCM 9820 / NBRC 100138 / K1).